Here is a 189-residue protein sequence, read N- to C-terminus: Dual-action ribosomal maturation protein DarP (189 aa).

Residues 1–22 (MWKNGAMRGCNKETGEFLGPSR) are disordered.

It belongs to the DarP family.

Its subcellular location is the cytoplasm. Its function is as follows. Member of a network of 50S ribosomal subunit biogenesis factors which assembles along the 30S-50S interface, preventing incorrect 23S rRNA structures from forming. Promotes peptidyl transferase center (PTC) maturation. The chain is Dual-action ribosomal maturation protein DarP from Xylella fastidiosa (strain Temecula1 / ATCC 700964).